A 591-amino-acid polypeptide reads, in one-letter code: Complement component C8 beta chain (591 aa).

Positions 1–32 (MKNSRTWAWRAPVELFLLCAALGCLSLPGSRG) are cleaved as a signal peptide. A propeptide spanning residues 33–54 (ERPHSFGSNAVNKSFAKSRQMR) is cleaved from the precursor. Residues 64–117 (DCELSSWSSWTTCDPCQKKRYRYAYLLQPSQFHGEPCNFSDKEVEDCVTNRPCG) enclose the TSP type-1 1 domain. Cystine bridges form between C65/C100, C76/C110, C79/C116, C122/C133, C127/C146, C140/C155, and C162/C200. C-linked (Man) tryptophan glycosylation is found at W70 and W73. A glycan (N-linked (GlcNAc...) asparagine) is linked at N101. Residues 120–157 (VRCEGFVCAQTGRCVNRRLLCNGDNDCGDQSDEANCRR) enclose the LDL-receptor class A domain. Ca(2+)-binding residues include L138, N141, D143, D145, D151, and E152. In terms of domain architecture, MACPF spans 158 to 504 (IYKKCQHEMD…EFQKEVSSCH (347 aa)). N243 carries N-linked (GlcNAc...) asparagine glycosylation. Transmembrane regions (beta stranded) follow at residues 252–259 (SGFSFGFK), 262–269 (GIFELGIS), 379–386 (AKNDFKIG), and 392–399 (VYVSLGVS). The cysteines at positions 378 and 403 are disulfide-linked. The residue at position 418 (T418) is a Phosphothreonine. Cystine bridges form between C503–C550, C505–C521, C508–C523, and C525–C534. One can recognise an EGF-like domain in the interval 505–535 (CAPCQGNGVPVLKGSRCDCICPVGSQGLACE). In terms of domain architecture, TSP type-1 2 spans 545-591 (DGKWNCWSNWSSCSGRRKTRQRQCNNPPPQNGGSPCSGPASETLDCS). C-linked (Man) tryptophan glycosylation is found at W551 and W554. Cysteines 557 and 590 form a disulfide. Residues 568–591 (CNNPPPQNGGSPCSGPASETLDCS) are disordered.

This sequence belongs to the complement C6/C7/C8/C9 family. In terms of assembly, heterotrimer of 3 chains: alpha (C8A), beta (C8B) and gamma (C8G); the alpha and gamma chains are disulfide bonded. Component of the membrane attack complex (MAC), composed of complement C5b, C6, C7, C8A, C8B, C8G and multiple copies of the pore-forming subunit C9. In terms of processing, N-glycosylated; contains one or two bound glycans. Not O-glycosylated.

The protein localises to the secreted. Its subcellular location is the target cell membrane. With respect to regulation, membrane attack complex (MAC) assembly is inhibited by CD59, thereby protecting self-cells from damage during complement activation. CD59 acts by binding to the beta-haipins of C8 (C8A and C8B), forming an intermolecular beta-sheet that prevents incorporation of the multiple copies of C9 required for complete formation of the osmolytic pore. MAC assembly is also inhibited by clusterin (CLU) chaperones that inhibit polymerization of C9. Component of the membrane attack complex (MAC), a multiprotein complex activated by the complement cascade, which inserts into a target cell membrane and forms a pore, leading to target cell membrane rupture and cell lysis. The MAC is initiated by proteolytic cleavage of C5 into complement C5b in response to the classical, alternative, lectin and GZMK complement pathways. The complement pathways consist in a cascade of proteins that leads to phagocytosis and breakdown of pathogens and signaling that strengthens the adaptive immune system. C8B, together with C8A and C8G, inserts into the target membrane, but does not form pores by itself. During MAC assembly, associates with C5b, C6 and C7 to form the C5b8 intermediate complex that inserts into the target membrane and traverses the bilayer increasing membrane rigidity. The polypeptide is Complement component C8 beta chain (Homo sapiens (Human)).